Reading from the N-terminus, the 363-residue chain is Inactive CLIP domain-containing serine protease A8 (363 aa).

The N-terminal stretch at 1–25 (MPSWWCCCCLVVLLYAQRMIVPSSA) is a signal peptide. Positions 33 to 82 (LQECPGGFCSPKYLCPNGTYNEANAQNQEIIMLRFGEEDVCQDYMQVCCS) constitute a Clip domain. Intrachain disulfides connect Cys-36–Cys-80, Cys-41–Cys-73, and Cys-47–Cys-81. Residues Asn-49, Asn-83, Asn-117, and Asn-166 are each glycosylated (N-linked (GlcNAc...) asparagine). Residues 114–360 (VEGNRTYAQY…FVTWINATIE (247 aa)) form the Peptidase S1 domain. Intrachain disulfides connect Cys-245-Cys-317, Cys-276-Cys-297, and Cys-307-Cys-336. 2 N-linked (GlcNAc...) asparagine glycosylation sites follow: Asn-319 and Asn-356.

Belongs to the peptidase S1 family. CLIP subfamily. As to quaternary structure, heterodimer of a light chain and a heavy chain; disulfide-linked. In terms of processing, secreted as a full-length protein. Proteolytically cleaved into two chains which remain covalently linked. Cleavage is induced by Gram-positive or Gram-negative bacteria infection.

The protein localises to the secreted. In terms of biological role, inactive serine protease which plays an essential role in the innate immune response against bacteria, fungi and protozoa infection by activating the melanization cascade. In the melanization cascade, acts downstream of TEP1 and SPCLIP1 to promote CLIPA28 and CLIPC9 proteolytic cleavage and CLIPC9 recruitment to microbial surfaces. In the resistant strain L3-5, required for the melanization of killed parasite P.berghei ookinetes which results in their clearance. In the susceptible strain G3, appears to be dispensable for ookinete elimination which occurs by lysis. Required for the melanization of Gram-positive and Gram-negative bacteria. During the late stage of fungus B.bassiana-mediated infection, required for the initiation of hyphae melanization by promoting prophenoloxidase PPO activation. The chain is Inactive CLIP domain-containing serine protease A8 from Anopheles gambiae (African malaria mosquito).